A 148-amino-acid chain; its full sequence is Aspartate 1-decarboxylase (148 aa).

S25 (schiff-base intermediate with substrate; via pyruvic acid) is an active-site residue. S25 bears the Pyruvic acid (Ser) mark. T57 provides a ligand contact to substrate. Y58 functions as the Proton donor in the catalytic mechanism. 73 to 75 (GAA) contacts substrate.

It belongs to the PanD family. Heterooctamer of four alpha and four beta subunits. Pyruvate is required as a cofactor. Is synthesized initially as an inactive proenzyme, which is activated by self-cleavage at a specific serine bond to produce a beta-subunit with a hydroxyl group at its C-terminus and an alpha-subunit with a pyruvoyl group at its N-terminus.

The protein resides in the cytoplasm. The enzyme catalyses L-aspartate + H(+) = beta-alanine + CO2. It functions in the pathway cofactor biosynthesis; (R)-pantothenate biosynthesis; beta-alanine from L-aspartate: step 1/1. In terms of biological role, catalyzes the pyruvoyl-dependent decarboxylation of aspartate to produce beta-alanine. The chain is Aspartate 1-decarboxylase from Rhodococcus erythropolis (strain PR4 / NBRC 100887).